A 269-amino-acid polypeptide reads, in one-letter code: Shikimate dehydrogenase (NADP(+)) (269 aa).

Residues 17 to 19 (SKS) and Thr-64 each bind shikimate. Lys-68 serves as the catalytic Proton acceptor. Glu-80 lines the NADP(+) pocket. The shikimate site is built by Asn-89 and Asp-105. NADP(+)-binding positions include 130-134 (GAGGA), 154-159 (NRTHAK), and Met-213. Shikimate is bound at residue Tyr-215. Residue Gly-237 coordinates NADP(+).

The protein belongs to the shikimate dehydrogenase family. As to quaternary structure, homodimer.

The enzyme catalyses shikimate + NADP(+) = 3-dehydroshikimate + NADPH + H(+). It functions in the pathway metabolic intermediate biosynthesis; chorismate biosynthesis; chorismate from D-erythrose 4-phosphate and phosphoenolpyruvate: step 4/7. Its function is as follows. Involved in the biosynthesis of the chorismate, which leads to the biosynthesis of aromatic amino acids. Catalyzes the reversible NADPH linked reduction of 3-dehydroshikimate (DHSA) to yield shikimate (SA). This Neisseria flavescens protein is Shikimate dehydrogenase (NADP(+)).